The following is a 257-amino-acid chain: Low affinity immunoglobulin gamma Fc region receptor III-A (257 aa).

A signal peptide spans 1 to 19 (MWQLLSPTALLLLVSVPGT). Residues 20–209 (HAEDPPKSVV…ILSFFLPWHQ (190 aa)) lie on the Extracellular side of the membrane. Ig-like C2-type domains follow at residues 25–104 (PKSV…LRLE) and 108–190 (GWLL…VKVT). 2 cysteine pairs are disulfide-bonded: Cys-48/Cys-90 and Cys-129/Cys-173. Asn-64, Asn-134, and Asn-162 each carry an N-linked (GlcNAc...) asparagine glycan. Asp-181 carries N-linked (GlcNAc...) asparagine; in variant N-181 glycosylation. A helical membrane pass occupies residues 210 to 230 (IIFCLVMGFLFAVDTGLYFSV). Over 231 to 257 (RKVLRSSKEDWRNGKVTWSRDPADKGG) the chain is Cytoplasmic.

As to quaternary structure, forms a heterooligomeric complex with ITAM-containing signaling subunits FCER1G. Interacts (via transmembrane domain) with signaling subunits; this interaction is a prerequisite for receptor complex expression on the cell surface and intracellular signal transduction. Binds the Fc region of antigen-complexed IgG. Expressed in polymorphonuclear leukocytes, pulmonary alveolar macrophages and peripheral blood mononuclear cells (at protein level). Found in spleen, and at very low levels in lymph nodes but not in thymus or liver.

The protein resides in the cell membrane. Functionally, receptor for the invariable Fc fragment of immunoglobulin gamma (IgG). Optimally activated upon binding of clustered antigen-IgG complexes displayed on cell surfaces, triggers lysis of antibody-coated cells, a process known as antibody-dependent cellular cytotoxicity (ADCC). Does not bind free monomeric IgG, thus avoiding inappropriate effector cell activation in the absence of antigenic trigger. Mediates IgG effector functions on natural killer (NK) cells. Binds antigen-IgG complexes generated upon infection and triggers NK cell-dependent cytokine production and degranulation to limit viral load and propagation. Fc-binding subunit that associates with FCER1G adapter to form functional signaling complexes. Following the engagement of antigen-IgG complexes, triggers phosphorylation of immunoreceptor tyrosine-based activation motif (ITAM)-containing adapter with subsequent activation of phosphatidylinositol 3-kinase signaling and sustained elevation of intracellular calcium that ultimately drive NK cell activation. Mediates enhanced ADCC in response to afucosylated IgGs. In Sus scrofa (Pig), this protein is Low affinity immunoglobulin gamma Fc region receptor III-A.